The sequence spans 478 residues: MNLYIYNTLSRKKERFVPLNCKSVKMYVCGPTVYDIPHIGNARSVVVYDLLYRVLSLLYGRQNITYVRNITDIDDKIINRAKELKISIFKLTHETTIKFHEDMSYLGCCNPTIEPKATDNIDVMINIITSLIQTGNAYSTDDGHVYFAVKTFQDYNLLSRRTFDSMILNSRESSEPQKSYFADFVLWKPANADNEDIDAVFDSPWGKGRPGWHIECSAMSYKFLGENFDIHGGGADLIFPHHTNEIAQSRCAFPESRHALYWVHNGFLTVKGEKMSKSLNNFVTVRDLQKQNINGAAVRLMFLSTHYRKPLDFNDKSLNDAKNIINYLYDTIDSVNGTAQQQDNIKAEFKGNAFTVEFISALLDDLNSPKAIACLLNIAKQIRRQNQSEDKLALTQALLYASNLLGILHNYQFIKDSNDVKDNSNVTPHEIDLLIAKRIQAKQDKDWNLADQIRSQLLSNGISLTDKADGTTSWKVIK.

C29 lines the Zn(2+) pocket. The short motif at 31–41 (PTVYDIPHIGN) is the 'HIGH' region element. Zn(2+) contacts are provided by C216, H241, and E245. A 'KMSKS' region motif is present at residues 274 to 278 (KMSKS). K277 serves as a coordination point for ATP.

It belongs to the class-I aminoacyl-tRNA synthetase family. As to quaternary structure, monomer. Zn(2+) is required as a cofactor.

Its subcellular location is the cytoplasm. It catalyses the reaction tRNA(Cys) + L-cysteine + ATP = L-cysteinyl-tRNA(Cys) + AMP + diphosphate. The protein is Cysteine--tRNA ligase of Orientia tsutsugamushi (strain Ikeda) (Rickettsia tsutsugamushi).